The following is a 270-amino-acid chain: Transmembrane protein 176B (270 aa).

4 helical membrane-spanning segments follow: residues 65–85, 95–115, 127–147, and 209–229; these read LALG…GVCL, ASGC…GAIV, VSSL…VLCV, and LFLA…GVGL. Residues Ser-236, Ser-245, Ser-254, and Ser-258 each carry the phosphoserine modification. A disordered region spans residues 237–270; that stretch reads SQPLNEEGSEKRLLGENSVPPSPSREQTSTAIVL. The segment covering 260 to 270 has biased composition (polar residues); the sequence is SREQTSTAIVL.

Belongs to the TMEM176 family.

The protein localises to the nucleus membrane. Its function is as follows. May play a role in the process of maturation of dendritic cells. Required for the development of cerebellar granule cells. In Pongo abelii (Sumatran orangutan), this protein is Transmembrane protein 176B (TMEM176B).